We begin with the raw amino-acid sequence, 342 residues long: Ketol-acid reductoisomerase (NADP(+)) (342 aa).

One can recognise a KARI N-terminal Rossmann domain in the interval 2 to 182 (AKIYYDDDAD…GGLRAGGIET (181 aa)). NADP(+) is bound by residues 25–28 (YGSQ), Arg48, Ser51, Ser53, and 83–86 (DQNQ). His108 is an active-site residue. Gly134 is an NADP(+) binding site. The 146-residue stretch at 183–328 (SFREETETDL…KELRKMYSWL (146 aa)) folds into the KARI C-terminal knotted domain. Asp191, Glu195, Glu227, and Glu231 together coordinate Mg(2+). Ser252 serves as a coordination point for substrate.

The protein belongs to the ketol-acid reductoisomerase family. Requires Mg(2+) as cofactor.

It carries out the reaction (2R)-2,3-dihydroxy-3-methylbutanoate + NADP(+) = (2S)-2-acetolactate + NADPH + H(+). It catalyses the reaction (2R,3R)-2,3-dihydroxy-3-methylpentanoate + NADP(+) = (S)-2-ethyl-2-hydroxy-3-oxobutanoate + NADPH + H(+). Its pathway is amino-acid biosynthesis; L-isoleucine biosynthesis; L-isoleucine from 2-oxobutanoate: step 2/4. The protein operates within amino-acid biosynthesis; L-valine biosynthesis; L-valine from pyruvate: step 2/4. In terms of biological role, involved in the biosynthesis of branched-chain amino acids (BCAA). Catalyzes an alkyl-migration followed by a ketol-acid reduction of (S)-2-acetolactate (S2AL) to yield (R)-2,3-dihydroxy-isovalerate. In the isomerase reaction, S2AL is rearranged via a Mg-dependent methyl migration to produce 3-hydroxy-3-methyl-2-ketobutyrate (HMKB). In the reductase reaction, this 2-ketoacid undergoes a metal-dependent reduction by NADPH to yield (R)-2,3-dihydroxy-isovalerate. The polypeptide is Ketol-acid reductoisomerase (NADP(+)) (Cutibacterium acnes (strain DSM 16379 / KPA171202) (Propionibacterium acnes)).